A 907-amino-acid polypeptide reads, in one-letter code: Protein translocase subunit SecA (907 aa).

Residues glutamine 87, 105 to 109 (GEGKT), and aspartate 513 contribute to the ATP site. Over residues 841–853 (EAQRRAQAEEAAR) the composition is skewed to basic and acidic residues. The interval 841–907 (EAQRRAQAEE…KYKQCHGQIN (67 aa)) is disordered. A compositionally biased stretch (low complexity) spans 854 to 865 (RAQAQHASAQSQ). Residues 872 to 887 (EGHHQPVVRDERKVGR) show a composition bias toward basic and acidic residues. Residues cysteine 891, cysteine 893, cysteine 902, and histidine 903 each contribute to the Zn(2+) site.

The protein belongs to the SecA family. Monomer and homodimer. Part of the essential Sec protein translocation apparatus which comprises SecA, SecYEG and auxiliary proteins SecDF-YajC and YidC. The cofactor is Zn(2+).

The protein resides in the cell inner membrane. It is found in the cytoplasm. The enzyme catalyses ATP + H2O + cellular proteinSide 1 = ADP + phosphate + cellular proteinSide 2.. Functionally, part of the Sec protein translocase complex. Interacts with the SecYEG preprotein conducting channel. Has a central role in coupling the hydrolysis of ATP to the transfer of proteins into and across the cell membrane, serving both as a receptor for the preprotein-SecB complex and as an ATP-driven molecular motor driving the stepwise translocation of polypeptide chains across the membrane. This Vibrio vulnificus (strain CMCP6) protein is Protein translocase subunit SecA.